Consider the following 1240-residue polypeptide: DNA-directed RNA polymerase subunit beta (1240 aa).

It belongs to the RNA polymerase beta chain family. In terms of assembly, the RNAP catalytic core consists of 2 alpha, 1 beta, 1 beta' and 1 omega subunit. When a sigma factor is associated with the core the holoenzyme is formed, which can initiate transcription.

It carries out the reaction RNA(n) + a ribonucleoside 5'-triphosphate = RNA(n+1) + diphosphate. Functionally, DNA-dependent RNA polymerase catalyzes the transcription of DNA into RNA using the four ribonucleoside triphosphates as substrates. The sequence is that of DNA-directed RNA polymerase subunit beta from Phytoplasma australiense.